A 414-amino-acid polypeptide reads, in one-letter code: Glutathione gamma-glutamylcysteinyltransferase (414 aa).

In terms of domain architecture, Peptidase C83 spans Gln-37–Ile-256.

The protein belongs to the phytochelatin synthase family.

The catalysed reaction is [Glu(-Cys)](n)-Gly + glutathione + H(+) = [Glu(-Cys)](n+1)-Gly + glycine. Its function is as follows. Required for detoxification of heavy metals such as cadmium and arsenate. The polypeptide is Glutathione gamma-glutamylcysteinyltransferase (Schizosaccharomyces pombe (strain 972 / ATCC 24843) (Fission yeast)).